Here is a 399-residue protein sequence, read N- to C-terminus: Serine/threonine-protein kinase PknL (399 aa).

The Cytoplasmic segment spans residues Met1 to Arg368. The 260-residue stretch at Tyr19–Ile278 folds into the Protein kinase domain. Residues Ile25–Val33 and Lys48 each bind ATP. A Phosphothreonine; by autocatalysis modification is found at Thr32. The residue at position 62 (Thr62) is a Phosphothreonine; by autocatalysis. The Proton acceptor role is filled by Asp142. 3 positions are modified to phosphothreonine; by autocatalysis: Thr173, Thr175, and Thr323. A disordered region spans residues Gly312–Pro346. Residues Met369–Trp389 traverse the membrane as a helical segment. The Extracellular segment spans residues Thr390–Leu399.

This sequence belongs to the protein kinase superfamily. Ser/Thr protein kinase family. In terms of processing, autophosphorylated. Thr-173 is required for autophosphorylation and transphosphorylation activities. Thr-175 is not necessary for autophosphorylation activity, but is required for full kinase activity.

It is found in the cell membrane. It catalyses the reaction L-seryl-[protein] + ATP = O-phospho-L-seryl-[protein] + ADP + H(+). The catalysed reaction is L-threonyl-[protein] + ATP = O-phospho-L-threonyl-[protein] + ADP + H(+). Phosphorylates the DNA-binding protein MT2231. May be involved in the regulation of cell division and cell envelope biosynthesis. The polypeptide is Serine/threonine-protein kinase PknL (pknL) (Mycobacterium tuberculosis (strain CDC 1551 / Oshkosh)).